The chain runs to 83 residues: RNA-binding protein Hfq (83 aa).

Positions aspartate 11–valine 71 constitute a Sm domain.

This sequence belongs to the Hfq family. Homohexamer.

Its function is as follows. RNA chaperone that binds small regulatory RNA (sRNAs) and mRNAs to facilitate mRNA translational regulation in response to envelope stress, environmental stress and changes in metabolite concentrations. Also binds with high specificity to tRNAs. This is RNA-binding protein Hfq from Methylobacterium radiotolerans (strain ATCC 27329 / DSM 1819 / JCM 2831 / NBRC 15690 / NCIMB 10815 / 0-1).